Consider the following 115-residue polypeptide: NADH-ubiquinone oxidoreductase chain 3 (115 aa).

The next 3 helical transmembrane spans lie at 4–24, 55–75, and 87–107; these read LMVM…AFWL, FFLV…LLPL, and MMLT…YEWM.

It belongs to the complex I subunit 3 family. Core subunit of respiratory chain NADH dehydrogenase (Complex I) which is composed of 45 different subunits. Interacts with TMEM186. Interacts with TMEM242.

It is found in the mitochondrion inner membrane. It catalyses the reaction a ubiquinone + NADH + 5 H(+)(in) = a ubiquinol + NAD(+) + 4 H(+)(out). Functionally, core subunit of the mitochondrial membrane respiratory chain NADH dehydrogenase (Complex I) which catalyzes electron transfer from NADH through the respiratory chain, using ubiquinone as an electron acceptor. Essential for the catalytic activity of complex I. In Peromyscus mexicanus (Mexican deer mouse), this protein is NADH-ubiquinone oxidoreductase chain 3.